The sequence spans 233 residues: Probable septum site-determining protein MinC (233 aa).

The segment at 104-124 (QKMATPEPAPAPAPVVDPNAP) is disordered.

The protein belongs to the MinC family. In terms of assembly, interacts with MinD and FtsZ.

Its function is as follows. Cell division inhibitor that blocks the formation of polar Z ring septums. Rapidly oscillates between the poles of the cell to destabilize FtsZ filaments that have formed before they mature into polar Z rings. Prevents FtsZ polymerization. In Serratia proteamaculans (strain 568), this protein is Probable septum site-determining protein MinC.